The sequence spans 282 residues: MEKRPYSVAWLSESSQRKPLCTNVDLLGYKSGNPDLPPNREYNVSLPSRVILPTPDYREKENYCGRNVHNGERSPPVRDQLHFHPAPQELTTSRRTSIEVSAESSTDQRVIGMTDTNKKTISVCDEDAASRARTKFTAEQLEELEKSFKENRYIGSSEKRRLSKVLKLSENQIKTWFQNRRMKFKRQTQDARVEAFFSGLYLPYYGYPDLPTPGYSVQSEFPVLAPQTMAASSIPFGPLHSTVMSPGLHPAIPSANLGSYPCSSMLVRPILNEPTRQRYSPY.

The homeobox DNA-binding region spans 129-188 (ASRARTKFTAEQLEELEKSFKENRYIGSSEKRRLSKVLKLSENQIKTWFQNRRMKFKRQT).

It is found in the nucleus. Its function is as follows. Transcriptional repressor. Acts in a ventral signaling pathway downstream of bmp4 to antagonize the Spemann organizer and ventrally pattern the embryonic mesoderm. Represses transcription of the dorsal genes gsc and otx2. This Xenopus tropicalis (Western clawed frog) protein is Homeobox protein vex1.